The chain runs to 454 residues: Allantoinase (454 aa).

The Zn(2+) site is built by H58, H60, K149, H189, H245, and D318. Position 149 is an N6-carboxylysine (K149).

It belongs to the metallo-dependent hydrolases superfamily. Allantoinase family. Homotetramer. Zn(2+) serves as cofactor. Post-translationally, carboxylation allows a single lysine to coordinate two zinc ions.

The catalysed reaction is (S)-allantoin + H2O = allantoate + H(+). It functions in the pathway nitrogen metabolism; (S)-allantoin degradation; allantoate from (S)-allantoin: step 1/1. In terms of biological role, catalyzes the conversion of allantoin (5-ureidohydantoin) to allantoic acid by hydrolytic cleavage of the five-member hydantoin ring. This chain is Allantoinase, found in Enterococcus faecalis (strain ATCC 700802 / V583).